Here is a 311-residue protein sequence, read N- to C-terminus: Ribosomal protein L11 methyltransferase (311 aa).

S-adenosyl-L-methionine-binding residues include T162, G183, D205, and N248.

The protein belongs to the methyltransferase superfamily. PrmA family.

It is found in the cytoplasm. It carries out the reaction L-lysyl-[protein] + 3 S-adenosyl-L-methionine = N(6),N(6),N(6)-trimethyl-L-lysyl-[protein] + 3 S-adenosyl-L-homocysteine + 3 H(+). Methylates ribosomal protein L11. The chain is Ribosomal protein L11 methyltransferase from Bacillus velezensis (strain DSM 23117 / BGSC 10A6 / LMG 26770 / FZB42) (Bacillus amyloliquefaciens subsp. plantarum).